The sequence spans 190 residues: Large ribosomal subunit protein bL17 (190 aa).

The span at 135–165 (AKAAPAAEEAPAEEAPAAEEAATEEAPAAEE) shows a compositional bias: low complexity. The disordered stretch occupies residues 135–190 (AKAAPAAEEAPAEEAPAAEEAATEEAPAAEETATEEAAAEEAPAAEEAPAEEKDAK).

Belongs to the bacterial ribosomal protein bL17 family. In terms of assembly, part of the 50S ribosomal subunit. Contacts protein L32.

The chain is Large ribosomal subunit protein bL17 from Pseudarthrobacter chlorophenolicus (strain ATCC 700700 / DSM 12829 / CIP 107037 / JCM 12360 / KCTC 9906 / NCIMB 13794 / A6) (Arthrobacter chlorophenolicus).